We begin with the raw amino-acid sequence, 413 residues long: 3-oxoacyl-[acyl-carrier-protein] synthase 2 (413 aa).

Residues 3–412 (KRRVVVTGLG…GTNGSLIFKK (410 aa)) form the Ketosynthase family 3 (KS3) domain. Residues C164, H304, and H341 each act as for beta-ketoacyl synthase activity in the active site.

It belongs to the thiolase-like superfamily. Beta-ketoacyl-ACP synthases family. In terms of assembly, homodimer.

The enzyme catalyses a fatty acyl-[ACP] + malonyl-[ACP] + H(+) = a 3-oxoacyl-[ACP] + holo-[ACP] + CO2. It carries out the reaction (9Z)-hexadecenoyl-[ACP] + malonyl-[ACP] + H(+) = 3-oxo-(11Z)-octadecenoyl-[ACP] + holo-[ACP] + CO2. Its pathway is lipid metabolism; fatty acid biosynthesis. Its function is as follows. Involved in the type II fatty acid elongation cycle. Catalyzes the elongation of a wide range of acyl-ACP by the addition of two carbons from malonyl-ACP to an acyl acceptor. Can efficiently catalyze the conversion of palmitoleoyl-ACP (cis-hexadec-9-enoyl-ACP) to cis-vaccenoyl-ACP (cis-octadec-11-enoyl-ACP), an essential step in the thermal regulation of fatty acid composition. The chain is 3-oxoacyl-[acyl-carrier-protein] synthase 2 (fabF) from Escherichia coli O157:H7.